The sequence spans 94 residues: Integration host factor subunit beta (94 aa).

The protein belongs to the bacterial histone-like protein family. As to quaternary structure, heterodimer of an alpha and a beta chain.

In terms of biological role, this protein is one of the two subunits of integration host factor, a specific DNA-binding protein that functions in genetic recombination as well as in transcriptional and translational control. This chain is Integration host factor subunit beta, found in Caulobacter sp. (strain K31).